A 178-amino-acid chain; its full sequence is Large ribosomal subunit protein uL5 (178 aa).

It belongs to the universal ribosomal protein uL5 family. In terms of assembly, part of the 50S ribosomal subunit; part of the 5S rRNA/L5/L18/L25 subcomplex. Contacts the 5S rRNA and the P site tRNA. Forms a bridge to the 30S subunit in the 70S ribosome.

This is one of the proteins that bind and probably mediate the attachment of the 5S RNA into the large ribosomal subunit, where it forms part of the central protuberance. In the 70S ribosome it contacts protein S13 of the 30S subunit (bridge B1b), connecting the 2 subunits; this bridge is implicated in subunit movement. Contacts the P site tRNA; the 5S rRNA and some of its associated proteins might help stabilize positioning of ribosome-bound tRNAs. In Acinetobacter baumannii (strain AB0057), this protein is Large ribosomal subunit protein uL5.